Reading from the N-terminus, the 1464-residue chain is DNA-directed RNA polymerase subunit beta' (1464 aa).

Positions 541, 543, and 545 each coordinate Mg(2+). Positions 1022, 1098, 1105, and 1108 each coordinate Zn(2+). Positions 1435 to 1464 are disordered; it reads LEDEQQQIIEVDDSDISVEDEENDFYENED.

The protein belongs to the RNA polymerase beta' chain family. In terms of assembly, the RNAP catalytic core consists of 2 alpha, 1 beta, 1 beta' and 1 omega subunit. When a sigma factor is associated with the core the holoenzyme is formed, which can initiate transcription. Requires Mg(2+) as cofactor. Zn(2+) is required as a cofactor.

The catalysed reaction is RNA(n) + a ribonucleoside 5'-triphosphate = RNA(n+1) + diphosphate. In terms of biological role, DNA-dependent RNA polymerase catalyzes the transcription of DNA into RNA using the four ribonucleoside triphosphates as substrates. The sequence is that of DNA-directed RNA polymerase subunit beta' from Metamycoplasma arthritidis (strain 158L3-1) (Mycoplasma arthritidis).